Consider the following 211-residue polypeptide: Ribosomal RNA small subunit methyltransferase G (211 aa).

S-adenosyl-L-methionine is bound by residues glycine 74, leucine 79, 125–126 (AE), and arginine 140.

This sequence belongs to the methyltransferase superfamily. RNA methyltransferase RsmG family.

It localises to the cytoplasm. Its function is as follows. Specifically methylates the N7 position of guanine in position 518 of 16S rRNA. The chain is Ribosomal RNA small subunit methyltransferase G from Clavibacter sepedonicus (Clavibacter michiganensis subsp. sepedonicus).